Consider the following 186-residue polypeptide: Inosine/xanthosine triphosphatase (186 aa).

Gln75 contributes to the Mg(2+) binding site.

It belongs to the YjjX NTPase family. In terms of assembly, homodimer. It depends on Mg(2+) as a cofactor. The cofactor is Mn(2+).

It carries out the reaction XTP + H2O = XDP + phosphate + H(+). The catalysed reaction is ITP + H2O = IDP + phosphate + H(+). Functionally, phosphatase that hydrolyzes non-canonical purine nucleotides such as XTP and ITP to their respective diphosphate derivatives. Probably excludes non-canonical purines from DNA/RNA precursor pool, thus preventing their incorporation into DNA/RNA and avoiding chromosomal lesions. The polypeptide is Inosine/xanthosine triphosphatase (Shewanella baltica (strain OS185)).